The following is a 467-amino-acid chain: Ribulose bisphosphate carboxylase large chain (467 aa).

Residue Lys6 is modified to N6,N6,N6-trimethyllysine. Substrate contacts are provided by Asn115 and Thr165. Lys167 serves as the catalytic Proton acceptor. Lys169 provides a ligand contact to substrate. The Mg(2+) site is built by Lys193, Asp195, and Glu196. N6-carboxylysine is present on Lys193. Catalysis depends on His286, which acts as the Proton acceptor. Positions 287, 319, and 371 each coordinate substrate.

It belongs to the RuBisCO large chain family. Type I subfamily. Heterohexadecamer of 8 large chains and 8 small chains; disulfide-linked. The disulfide link is formed within the large subunit homodimers. Requires Mg(2+) as cofactor. In terms of processing, the disulfide bond which can form in the large chain dimeric partners within the hexadecamer appears to be associated with oxidative stress and protein turnover.

The protein resides in the plastid. Its subcellular location is the chloroplast. The catalysed reaction is 2 (2R)-3-phosphoglycerate + 2 H(+) = D-ribulose 1,5-bisphosphate + CO2 + H2O. It catalyses the reaction D-ribulose 1,5-bisphosphate + O2 = 2-phosphoglycolate + (2R)-3-phosphoglycerate + 2 H(+). RuBisCO catalyzes two reactions: the carboxylation of D-ribulose 1,5-bisphosphate, the primary event in carbon dioxide fixation, as well as the oxidative fragmentation of the pentose substrate in the photorespiration process. Both reactions occur simultaneously and in competition at the same active site. The protein is Ribulose bisphosphate carboxylase large chain of Cedrus atlantica (Atlas cedar).